The sequence spans 193 residues: ATP-dependent Clp protease proteolytic subunit 2 (193 aa).

Catalysis depends on Ser98, which acts as the Nucleophile. The active site involves His123.

Belongs to the peptidase S14 family. As to quaternary structure, fourteen ClpP subunits assemble into 2 heptameric rings which stack back to back to give a disk-like structure with a central cavity, resembling the structure of eukaryotic proteasomes.

The protein resides in the cytoplasm. The enzyme catalyses Hydrolysis of proteins to small peptides in the presence of ATP and magnesium. alpha-casein is the usual test substrate. In the absence of ATP, only oligopeptides shorter than five residues are hydrolyzed (such as succinyl-Leu-Tyr-|-NHMec, and Leu-Tyr-Leu-|-Tyr-Trp, in which cleavage of the -Tyr-|-Leu- and -Tyr-|-Trp bonds also occurs).. Its function is as follows. Cleaves peptides in various proteins in a process that requires ATP hydrolysis. Has a chymotrypsin-like activity. Plays a major role in the degradation of misfolded proteins. This Bacillus cereus (strain ATCC 14579 / DSM 31 / CCUG 7414 / JCM 2152 / NBRC 15305 / NCIMB 9373 / NCTC 2599 / NRRL B-3711) protein is ATP-dependent Clp protease proteolytic subunit 2.